The primary structure comprises 949 residues: uncharacterized protein (949 aa).

The 107-residue stretch at 64–170 (LCSVHEAKKW…YCLHALSYLL (107 aa)) folds into the Calponin-homology (CH) domain.

The protein localises to the nucleus. This is an uncharacterized protein from Schizosaccharomyces pombe (strain 972 / ATCC 24843) (Fission yeast).